The sequence spans 931 residues: MDLATTNDAAGAGNDFDTARITGDIDALAAKHAGHEDVFRAAVSRLLKAELAKVRDAAQAKLLRDRHGRRCAERLCFIQDEIIRLSFSAATRHLYHSPIPSDGERMAVVATGGYGRGLMAPESDIDLLFILPYKQTAWGEQVAEAILYCLWDMGLNVGHATRSVNESIRQARRDMTVRTGILETRFLAGDRALYDELVTRFDTEVVQGTAAEFVTAKLAEREERHRRAGQSRYLVEPNVKDGKGGLRDLHTLFWIAKYVYRVHESRELLGCGVFDVREYRTFRRCADFLWSVRCNLHFATGRAEERLSFDLQREIAVRLGYTSHPGMQDVERFMKHYFLTAKDVGDLTAILCAKLEDQQAKPAPVLGRMMSRRRPGTELRRVPEGDDFIIDNNRINLAAPDVFKRDPVNLIRVFRLAQKNNLAFHPDALRTVTRSRRLINAQLRENPEANRLFMEILTSNDAETVLRRMNETGVLGHFIRAFGKIVSMMQFNMYHHYTVDEHLLRCIGILQDIERGGNDELALASELMRKIHPEHRPVIYITTLLHDIAKGRPEDHSIAGARVARRLCPRLGFNASDTELIAWLIEQHLTMSKVAQSRDLSDRKTIENFAAVVQSVEQMKLLTILTTADIRGVGPGVWNGWKAQLLRTLYYETEPVLTGGFSEVNRVQRIAEAQAEFRAAFTEWSEPELNAYIARHYPAYWLKVDLAHKIRHARFLRASEQGGRKLNINVGFDEARGVTELTIFAADHPWLLSIIAGACASAGANIVDAQIYTTTDGQALDTIAISREYDRDEDEGRRAARIGEIIEQVIDGRLRLPDVVARRAAGKTRLRPFVVEPKVIVNNQWSDRHTVIEVSGLDRPGLLFQLTAAISKLNLNIASAHVATFGERARDVFYVTDLLGARITAPTRQAAIKRALIHLLANGGAAEQSVG.

The tract at residues 1–383 is uridylyltransferase; it reads MDLATTNDAA…RPGTELRRVP (383 aa). Residues 384–739 form a uridylyl-removing region; that stretch reads EGDDFIIDNN…VGFDEARGVT (356 aa). One can recognise an HD domain in the interval 499 to 622; the sequence is VDEHLLRCIG…VQSVEQMKLL (124 aa). 2 consecutive ACT domains span residues 740–822 and 851–931; these read ELTI…VVAR and VIEV…QSVG.

The protein belongs to the GlnD family. Mg(2+) serves as cofactor.

The enzyme catalyses [protein-PII]-L-tyrosine + UTP = [protein-PII]-uridylyl-L-tyrosine + diphosphate. It catalyses the reaction [protein-PII]-uridylyl-L-tyrosine + H2O = [protein-PII]-L-tyrosine + UMP + H(+). Its activity is regulated as follows. Uridylyltransferase (UTase) activity is inhibited by glutamine, while glutamine activates uridylyl-removing (UR) activity. In terms of biological role, modifies, by uridylylation and deuridylylation, the PII regulatory proteins (GlnB and homologs), in response to the nitrogen status of the cell that GlnD senses through the glutamine level. Under low glutamine levels, catalyzes the conversion of the PII proteins and UTP to PII-UMP and PPi, while under higher glutamine levels, GlnD hydrolyzes PII-UMP to PII and UMP (deuridylylation). Thus, controls uridylylation state and activity of the PII proteins, and plays an important role in the regulation of nitrogen assimilation and metabolism. This is Bifunctional uridylyltransferase/uridylyl-removing enzyme from Nitrobacter hamburgensis (strain DSM 10229 / NCIMB 13809 / X14).